The primary structure comprises 288 residues: NGG1-interacting factor 3 (288 aa).

It belongs to the GTP cyclohydrolase I type 2/NIF3 family. As to quaternary structure, may interact with NGG1.

It localises to the mitochondrion. This is NGG1-interacting factor 3 from Saccharomyces cerevisiae (strain ATCC 204508 / S288c) (Baker's yeast).